The following is a 131-amino-acid chain: Biogenesis of lysosome-related organelles complex 1 subunit 5 (131 aa).

This sequence belongs to the BLOC1S5 family. In terms of assembly, component of the biogenesis of lysosome-related organelles complex-1 (BLOC-1) composed at least of blos-1, blos-2, blos-4, dsbn-1, glo-2, mutd-1 and snpn-1.

Component of the biogenesis of lysosome-related organelles complex-1 (BLOC-1) involved in gut granule biogenesis. This Caenorhabditis elegans protein is Biogenesis of lysosome-related organelles complex 1 subunit 5 (mutd-1).